A 678-amino-acid chain; its full sequence is MASDSLKKRKPKVNRNEDVKRGRHEDQEGRYYSEEAEVDVRDPKEDYQLYKDTCLDLQRLMSEIQELKSKGSRDSALEIEEKKVQSCVHFMTLKKLNRLAHIRLKKARDQTHEAKQKVDAYHLQLQNLLYEVMHLQKEITKCLEFKSKHEEIELVSVEEFYSKAPVAISKPEITSTDPHQQTLSRLDWELEQRKRLAEKYKECLASKEKILKEIEIKKEYLNSLQPQLNSIMQASLPVQEYLSMPFDCMHKQYETARHLPAPLYVLFVQASAYSQACDRKLVVTIEGNVEEARALFKPPEDSQDDESDSDAEEEQTTKRRRPTLGVQLDDKRKEMLKRHPLCVTITLKCKEGSTLTLTFYFLMNLNILTVKVKILPAFELSTAISAGDLLNPDLMLSCLYQGDDGKTTPNPANQYQFDKIGILSLSDYISELGHPYIWVQAMGGLHFPTDQPQPAVVADNALSANHMEKTIKLLRTRLLSRLSLHRQFASLEHGSIPVSLECQSFFPAKVISRLTKWNVITYEDYLALPYTKDVIECGLAKETDQYFNLLIERGTAKLNGVVVLNPGYCAVPPVFSLCLNWKGERLSSNDDNIRVMESEVNVYYKELCGPPPGFQLLTNQIQRLCMLLDVYLETERHDNSVEGPHEFPPEKICLRLLRGPSRTKPFKYNYPQGFFSHR.

Disordered stretches follow at residues 1-35 (MASD…YSEE) and 294-329 (ALFK…VQLD). Positions 7–10 (KKRK) match the Nuclear localization signal motif. The span at 14–35 (NRNEDVKRGRHEDQEGRYYSEE) shows a compositional bias: basic and acidic residues. Residues 301-314 (DSQDDESDSDAEEE) are compositionally biased toward acidic residues.

Belongs to the THOC5 family. In terms of assembly, component of the THO subcomplex, which is composed of thoc1, thoc2, thoc3, thoc5, thoc6 and thoc7. Component of the transcription/export (TREX) complex at least composed of alyref/thoc4, ddx39b, sarnp/cip29, chtop and the THO subcomplex. Interacts with thoc7.

The protein resides in the nucleus. The protein localises to the nucleus speckle. It localises to the cytoplasm. In terms of biological role, component of the THO subcomplex of the TREX complex which is thought to couple mRNA transcription, processing and nuclear export, and which specifically associates with spliced mRNA and not with unspliced pre-mRNA. Plays a key structural role in the oligomerization of the THO-ddx39b complex. TREX is recruited to spliced mRNAs by a transcription-independent mechanism, binds to mRNA upstream of the exon-junction complex (EJC) and is recruited in a splicing- and cap-dependent manner to a region near the 5' end of the mRNA where it functions in mRNA export to the cytoplasm via the TAP/NXF1 pathway. May be involved in cell differentiation. This chain is THO complex subunit 5 homolog A (thoc5-a), found in Xenopus laevis (African clawed frog).